A 250-amino-acid polypeptide reads, in one-letter code: MTVKKLYFVPAGRCMLDHSSVNSTLTPGELLDLPVWCYLLETEEGPILVDTGMPESAVNNEGLFNGTFVEGQVLPKMTEEDRIVNILKRVGYEPEDLLYIISSHLHFDHAGGNGAFINTPIIVQRAEYEAAQHSEEYLKECILPNLNYKIIEGDYEVVPGVQLLHTPGHTPGHQSLLIETEKSGPVLLTIDASYTKENFENEVPFAGFDSELALSSIKRLKEVVMKEKPIVFFGHDIEQERGCKVFPEYI.

Zn(2+) is bound by residues His-104, His-106, Asp-108, His-109, His-169, Asp-191, and His-235.

This sequence belongs to the metallo-beta-lactamase superfamily. As to quaternary structure, monomer. Requires Zn(2+) as cofactor.

The enzyme catalyses an N-acyl-L-homoserine lactone + H2O = an N-acyl-L-homoserine + H(+). Its activity is regulated as follows. Completely inhibited by Cu(2+) and Ag(+). Partially inhibited by Cr(2+), Pb(2+) and Fe(2+). Mg(2+), Ca(2+), Mn(2+), Co(2+), Ni(2+), Zn(2+) and Cd(2+) have no effect on activity. The chelating agents EDTA, 2,2'bipyridine and o-phenanthroline have no effect on enzyme activity. Hydrolyzes acyl homoserine lactones with varying lengths of acyl chains, with a slight preference for substrates without 3-oxo substitution at the C3 position. Has only residual activity towards non-acyl lactones, and no activity towards non-cyclic esters. This chain is N-acyl homoserine lactonase, found in Bacillus sp.